A 369-amino-acid chain; its full sequence is Nuclear pore complex-interacting protein family member A6 (369 aa).

The segment at 151–170 (SMKEREHGEKERQVSEAEEN) is disordered.

The protein belongs to the NPIP family.

The chain is Nuclear pore complex-interacting protein family member A6 from Homo sapiens (Human).